Consider the following 359-residue polypeptide: MKKYLALALIAPLLISCSTTKKGDTYNEAWVKDTNGFDILMGQFAHNIENIWGFKEVVIAGPKDYVKYTDQYQTRSHINFDDGTITIETIAGTEPAAHLRRAIIKTLLMGDDPSSVDLYSDVDDITISKEPFLYGQVVDNTGQPIRWEGRASNFADYLLKNRLKSRSNGLRIIYSVTINMVPNHLDKRAHKYLGMVRQSSRKYGVDESLILAIMQTESSFNPYAVSRSDALGLMQVVQHTAGKDVFRSQGKSGTPSRSFLFDPASNIDTGTAYLAMLNNVYLGGIDNPTSRRYAVITAYNGGAGSVLRVFSNDKIQAANIINTMTPGDVYQTLTTRHPSAESRRYLYKVNTAQKSYRRR.

Positions 1-16 (MKKYLALALIAPLLIS) are cleaved as a signal peptide. The N-palmitoyl cysteine moiety is linked to residue C17. C17 carries S-diacylglycerol cysteine lipidation.

It belongs to the transglycosylase Slt family.

It is found in the cell outer membrane. The enzyme catalyses Exolytic cleavage of the (1-&gt;4)-beta-glycosidic linkage between N-acetylmuramic acid (MurNAc) and N-acetylglucosamine (GlcNAc) residues in peptidoglycan, from either the reducing or the non-reducing ends of the peptidoglycan chains, with concomitant formation of a 1,6-anhydrobond in the MurNAc residue.. In terms of biological role, murein-degrading enzyme. May play a role in recycling of muropeptides during cell elongation and/or cell division. The polypeptide is Membrane-bound lytic murein transglycosylase C (Escherichia fergusonii (strain ATCC 35469 / DSM 13698 / CCUG 18766 / IAM 14443 / JCM 21226 / LMG 7866 / NBRC 102419 / NCTC 12128 / CDC 0568-73)).